A 257-amino-acid chain; its full sequence is Aspartate/glutamate leucyltransferase (257 aa).

The protein belongs to the R-transferase family. Bpt subfamily.

It localises to the cytoplasm. The enzyme catalyses N-terminal L-glutamyl-[protein] + L-leucyl-tRNA(Leu) = N-terminal L-leucyl-L-glutamyl-[protein] + tRNA(Leu) + H(+). It carries out the reaction N-terminal L-aspartyl-[protein] + L-leucyl-tRNA(Leu) = N-terminal L-leucyl-L-aspartyl-[protein] + tRNA(Leu) + H(+). In terms of biological role, functions in the N-end rule pathway of protein degradation where it conjugates Leu from its aminoacyl-tRNA to the N-termini of proteins containing an N-terminal aspartate or glutamate. The sequence is that of Aspartate/glutamate leucyltransferase from Nitrobacter hamburgensis (strain DSM 10229 / NCIMB 13809 / X14).